The following is a 149-amino-acid chain: D-aminoacyl-tRNA deacylase (149 aa).

The short motif at 137–138 is the Gly-cisPro motif, important for rejection of L-amino acids element; it reads GP.

It belongs to the DTD family. Homodimer.

The protein localises to the cytoplasm. The catalysed reaction is glycyl-tRNA(Ala) + H2O = tRNA(Ala) + glycine + H(+). It catalyses the reaction a D-aminoacyl-tRNA + H2O = a tRNA + a D-alpha-amino acid + H(+). Its function is as follows. An aminoacyl-tRNA editing enzyme that deacylates mischarged D-aminoacyl-tRNAs. Also deacylates mischarged glycyl-tRNA(Ala), protecting cells against glycine mischarging by AlaRS. Acts via tRNA-based rather than protein-based catalysis; rejects L-amino acids rather than detecting D-amino acids in the active site. By recycling D-aminoacyl-tRNA to D-amino acids and free tRNA molecules, this enzyme counteracts the toxicity associated with the formation of D-aminoacyl-tRNA entities in vivo and helps enforce protein L-homochirality. This chain is D-aminoacyl-tRNA deacylase, found in Thermosipho africanus (strain TCF52B).